The chain runs to 507 residues: ATP synthase subunit alpha, chloroplastic (507 aa).

Residue 170-177 (GDRQTGKT) coordinates ATP.

It belongs to the ATPase alpha/beta chains family. F-type ATPases have 2 components, CF(1) - the catalytic core - and CF(0) - the membrane proton channel. CF(1) has five subunits: alpha(3), beta(3), gamma(1), delta(1), epsilon(1). CF(0) has four main subunits: a, b, b' and c.

It localises to the plastid. It is found in the chloroplast thylakoid membrane. The enzyme catalyses ATP + H2O + 4 H(+)(in) = ADP + phosphate + 5 H(+)(out). Produces ATP from ADP in the presence of a proton gradient across the membrane. The alpha chain is a regulatory subunit. The protein is ATP synthase subunit alpha, chloroplastic of Daucus carota (Wild carrot).